We begin with the raw amino-acid sequence, 439 residues long: D-inositol 3-phosphate glycosyltransferase (439 aa).

H21 contributes to the 1D-myo-inositol 3-phosphate binding site. UDP-N-acetyl-alpha-D-glucosamine is bound by residues 27–28 (QP) and G35. Residues 32–37 (DAGGMN), K90, Y123, T147, and R167 each bind 1D-myo-inositol 3-phosphate. UDP-N-acetyl-alpha-D-glucosamine contacts are provided by R241, K246, and Q299. Y308, R309, and A311 together coordinate Mg(2+). UDP-N-acetyl-alpha-D-glucosamine is bound by residues E321 and E329. A Mg(2+)-binding site is contributed by T335.

Belongs to the glycosyltransferase group 1 family. MshA subfamily. Homodimer.

It catalyses the reaction 1D-myo-inositol 3-phosphate + UDP-N-acetyl-alpha-D-glucosamine = 1D-myo-inositol 2-acetamido-2-deoxy-alpha-D-glucopyranoside 3-phosphate + UDP + H(+). In terms of biological role, catalyzes the transfer of a N-acetyl-glucosamine moiety to 1D-myo-inositol 3-phosphate to produce 1D-myo-inositol 2-acetamido-2-deoxy-glucopyranoside 3-phosphate in the mycothiol biosynthesis pathway. This is D-inositol 3-phosphate glycosyltransferase from Mycobacterium sp. (strain JLS).